The following is a 955-amino-acid chain: Eukaryotic translation initiation factor 3 subunit A (955 aa).

The stretch at leucine 96 to threonine 127 forms a coiled coil. Positions tyrosine 325–alanine 498 constitute a PCI domain. Coiled coils occupy residues alanine 533 to lysine 636 and lysine 752 to glycine 860. Positions arginine 789 to arginine 858 are enriched in basic and acidic residues. The disordered stretch occupies residues arginine 789–asparagine 955.

The protein belongs to the eIF-3 subunit A family. In terms of assembly, component of the eukaryotic translation initiation factor 3 (eIF-3) complex.

It localises to the cytoplasm. Its function is as follows. RNA-binding component of the eukaryotic translation initiation factor 3 (eIF-3) complex, which is involved in protein synthesis of a specialized repertoire of mRNAs and, together with other initiation factors, stimulates binding of mRNA and methionyl-tRNAi to the 40S ribosome. The eIF-3 complex specifically targets and initiates translation of a subset of mRNAs involved in cell proliferation. This Yarrowia lipolytica (strain CLIB 122 / E 150) (Yeast) protein is Eukaryotic translation initiation factor 3 subunit A.